The primary structure comprises 233 residues: MASEEAKFAARADRLAGRQGVAGFMPASARAAQPAPTNRYIMPQFVEKTPYGMKTQDAYSRLFEDRIIFLGVQVDDASADDVMAQLLVLESQDPNRDVMMYINSPGGSMTAMTAIYDTMQYIKPDVQTVCLGQAASAAAILLASGTKGKRLMLPNARVLIHQPAIDQGFGKATEIEIQAKEMLRMREWLEETLAKHTGQDVEKIRRDIEVDTFLTAPEAKEYGIVDEVLEHRQ.

Ser-136 (nucleophile) is an active-site residue. His-161 is a catalytic residue.

The protein belongs to the peptidase S14 family. Fourteen ClpP subunits assemble into 2 heptameric rings which stack back to back to give a disk-like structure with a central cavity, resembling the structure of eukaryotic proteasomes.

The protein resides in the cytoplasm. The enzyme catalyses Hydrolysis of proteins to small peptides in the presence of ATP and magnesium. alpha-casein is the usual test substrate. In the absence of ATP, only oligopeptides shorter than five residues are hydrolyzed (such as succinyl-Leu-Tyr-|-NHMec, and Leu-Tyr-Leu-|-Tyr-Trp, in which cleavage of the -Tyr-|-Leu- and -Tyr-|-Trp bonds also occurs).. Functionally, cleaves peptides in various proteins in a process that requires ATP hydrolysis. Has a chymotrypsin-like activity. Plays a major role in the degradation of misfolded proteins. The sequence is that of ATP-dependent Clp protease proteolytic subunit 1 from Bifidobacterium longum (strain NCC 2705).